Here is a 346-residue protein sequence, read N- to C-terminus: Methylthioribose-1-phosphate isomerase (346 aa).

Substrate-binding positions include 46–48 (RGA), Arg-89, and Gln-196. The active-site Proton donor is Asp-237. Substrate is bound at residue 247–248 (NK).

This sequence belongs to the eIF-2B alpha/beta/delta subunits family. MtnA subfamily.

The catalysed reaction is 5-(methylsulfanyl)-alpha-D-ribose 1-phosphate = 5-(methylsulfanyl)-D-ribulose 1-phosphate. Its pathway is amino-acid biosynthesis; L-methionine biosynthesis via salvage pathway; L-methionine from S-methyl-5-thio-alpha-D-ribose 1-phosphate: step 1/6. In terms of biological role, catalyzes the interconversion of methylthioribose-1-phosphate (MTR-1-P) into methylthioribulose-1-phosphate (MTRu-1-P). The sequence is that of Methylthioribose-1-phosphate isomerase from Geobacter metallireducens (strain ATCC 53774 / DSM 7210 / GS-15).